Reading from the N-terminus, the 116-residue chain is uncharacterized protein (116 aa).

Transmembrane regions (helical) follow at residues 55–77 and 87–109; these read LSYS…LYSF and FSYG…YAAL.

The protein localises to the membrane. This is an uncharacterized protein from Saccharomyces cerevisiae (strain ATCC 204508 / S288c) (Baker's yeast).